Consider the following 192-residue polypeptide: C-X-C chemokine receptor type 4 (192 aa).

Tyr-1 is subject to Sulfotyrosine. The important for chemokine binding and signaling stretch occupies residues 1–11; that stretch reads YTEDDLGSGDY. The Extracellular segment spans residues 1–28; it reads YTEDDLGSGDYDSMKEPCFREENAHFNR. A glycan (O-linked (Xyl...) (chondroitin sulfate) serine) is linked at Ser-8. The residue at position 11 (Tyr-11) is a Sulfotyrosine. The helical transmembrane segment at 29–53 threads the bilayer; the sequence is IFLPTVYSIIFLTGIVGNGLVILVM. Topologically, residues 54–67 are cytoplasmic; it reads GYQKKLRSMTDKYR. The helical transmembrane segment at 68–89 threads the bilayer; it reads LHLSVADLLFVLTLPFWAVDAV. Positions 84–87 are chemokine binding; the sequence is WAVD. Over 90-100 the chain is Extracellular; the sequence is ANWYFGQFLCK. A disulfide bond links Cys-99 and Cys-176. The helical transmembrane segment at 101 to 120 threads the bilayer; it reads AVHVIYTVNLYSSVLILAFI. Residues 103-107 form a chemokine binding region; the sequence is HVIYT. The Cytoplasmic segment spans residues 121–144; the sequence is SLDRYLAIVHATNSQRPRKLLAEK. Residues 123 to 125 carry the Important for signaling motif; the sequence is DRY. Residues 125–137 are involved in dimerization; when bound to chemokine; the sequence is YLAIVHATNSQRP. A helical membrane pass occupies residues 145-164; that stretch reads VVYVGVWLPAVLLTIPDLIF. Topologically, residues 165-185 are extracellular; sequence ADIKEADERYICDRFYPSDLW. Positions 176–180 are chemokine binding, important for signaling; sequence CDRFY. Residues 186–192 traverse the membrane as a helical segment; sequence LVVFQFQ.

The protein belongs to the G-protein coupled receptor 1 family. As to quaternary structure, monomer. Can form homodimers. Interacts with CD164. Interacts with ARRB2; the interaction is dependent on the C-terminal phosphorylation of CXCR4 and allows activation of MAPK1 and MAPK3. Interacts with ARR3; the interaction is dependent on the C-terminal phosphorylation of CXCR4 and modulates calcium mobilization. Interacts with RNF113A; the interaction, enhanced by CXCL12, promotes CXCR4 ubiquitination and subsequent degradation. Interacts (via the cytoplasmic C-terminal) with ITCH (via the WW domains I and II); the interaction, enhanced by CXCL12, promotes CXCR4 ubiquitination and leads to its degradation. Interacts with extracellular ubiquitin. Interacts with DBN1; this interaction is enhanced by antigenic stimulation. Following LPS binding, may form a complex with GDF5, HSP90AA1 and HSPA8. In terms of processing, phosphorylated on agonist stimulation. Rapidly phosphorylated on serine and threonine residues in the C-terminal. Ubiquitinated after ligand binding, leading to its degradation. Ubiquitinated by ITCH at the cell membrane on agonist stimulation. The ubiquitin-dependent mechanism, endosomal sorting complex required for transport (ESCRT), then targets CXCR4 for lysosomal degradation. This process is dependent also on prior Ser-/Thr-phosphorylation in the C-terminal of CXCR4. Also binding of ARRB1 to STAM negatively regulates CXCR4 sorting to lysosomes though modulating ubiquitination of SFR5S. Post-translationally, sulfation is required for efficient binding of CXCL12/SDF-1alpha and promotes its dimerization. In terms of processing, O- and N-glycosylated. N-glycosylation can mask coreceptor function. The O-glycosylation chondroitin sulfate attachment does not affect interaction with CXCL12/SDF-1alpha nor its coreceptor activity.

Its subcellular location is the cell membrane. It localises to the cell junction. The protein resides in the early endosome. It is found in the late endosome. The protein localises to the lysosome. In terms of biological role, receptor for the C-X-C chemokine CXCL12/SDF-1 that transduces a signal by increasing intracellular calcium ion levels and enhancing MAPK1/MAPK3 activation. Involved in the AKT signaling cascade. Plays a role in regulation of cell migration, e.g. during wound healing. Acts as a receptor for extracellular ubiquitin; leading to enhanced intracellular calcium ions and reduced cellular cAMP levels. Binds bacterial lipopolysaccharide (LPS) et mediates LPS-induced inflammatory response, including TNF secretion by monocytes. Involved in hematopoiesis and in cardiac ventricular septum formation. Also plays an essential role in vascularization of the gastrointestinal tract, probably by regulating vascular branching and/or remodeling processes in endothelial cells. Involved in cerebellar development. In the CNS, could mediate hippocampal-neuron survival. This Ovis aries (Sheep) protein is C-X-C chemokine receptor type 4 (CXCR4).